We begin with the raw amino-acid sequence, 234 residues long: Putative lipoyltransferase 2, mitochondrial (234 aa).

The transit peptide at 1–28 (MPFVRPLVTVVRAGRHSYSAGLQLQQRL) directs the protein to the mitochondrion. A BPL/LPL catalytic domain is found at 39-220 (AEFRNYLVLQ…SFAKVFECRL (182 aa)). Substrate contacts are provided by residues 83–90 (RGGLITFH), 150–152 (AIG), and 163–165 (GIG). Cys181 acts as the Acyl-thioester intermediate in catalysis.

The protein belongs to the LipB family.

The protein localises to the mitochondrion. It carries out the reaction octanoyl-[ACP] + L-lysyl-[protein] = N(6)-octanoyl-L-lysyl-[protein] + holo-[ACP] + H(+). The protein operates within protein modification; protein lipoylation via endogenous pathway; protein N(6)-(lipoyl)lysine from octanoyl-[acyl-carrier-protein]: step 1/2. In terms of biological role, catalyzes the transfer of endogenously produced octanoic acid from octanoyl-acyl-carrier-protein onto the lipoyl domains of lipoate-dependent enzymes. Lipoyl-ACP can also act as a substrate although octanoyl-ACP is likely to be the physiological substrate. This Drosophila melanogaster (Fruit fly) protein is Putative lipoyltransferase 2, mitochondrial.